The sequence spans 589 residues: Putative phospholipase B-like 2 (589 aa).

The signal sequence occupies residues 1-41 (MVGQMYCYPGSHLARALTRALALALVLALLVGPFLSGLAGA). Asn88 and Asn110 each carry an N-linked (GlcNAc...) asparagine glycan. An intrachain disulfide couples Cys142 to Cys152. Residues Asn231, Asn436, and Asn465 are each glycosylated (N-linked (GlcNAc...) asparagine). Cys492 and Cys495 are oxidised to a cystine. A glycan (N-linked (GlcNAc...) asparagine) is linked at Asn515.

This sequence belongs to the phospholipase B-like family. Interacts with IGF2R. Post-translationally, the p76 protein is synthesized as a 80 kDa precursor which is then processed into a N-terminal 32 kDa form and a C-terminal 45 kDa form. In terms of processing, glycosylated; contains mannose 6-phosphate sugars. Ubiquitously expressed, with highest levels in heart, brain and liver.

Its subcellular location is the lysosome lumen. Functionally, putative phospholipase. In Homo sapiens (Human), this protein is Putative phospholipase B-like 2 (PLBD2).